The primary structure comprises 450 residues: Phosphoglucosamine mutase (450 aa).

Ser100 acts as the Phosphoserine intermediate in catalysis. Positions 100, 240, 242, and 244 each coordinate Mg(2+). Ser100 bears the Phosphoserine mark.

This sequence belongs to the phosphohexose mutase family. Mg(2+) serves as cofactor. Post-translationally, activated by phosphorylation.

The catalysed reaction is alpha-D-glucosamine 1-phosphate = D-glucosamine 6-phosphate. Catalyzes the conversion of glucosamine-6-phosphate to glucosamine-1-phosphate. This Desulforudis audaxviator (strain MP104C) protein is Phosphoglucosamine mutase.